We begin with the raw amino-acid sequence, 402 residues long: Triose phosphate/phosphate translocator, non-green plastid, chloroplastic (402 aa).

Residues 1–82 constitute a chloroplast transit peptide; that stretch reads MQSSAVFSAS…SLDTNRFKTA (82 aa). The Chloroplast intermembrane portion of the chain corresponds to 83–98; sequence ATAVPEEGEGSGKMTK. The chain crosses the membrane as a helical span at residues 99–119; that stretch reads VLELGLLFAMWYLFNIYFNIY. The 119-residue stretch at 118–236 folds into the EamA domain; the sequence is IYNKQVLKAL…IVGGVALASV (119 aa). At 120-131 the chain is on the lumenal side; that stretch reads NKQVLKALHAPM. The chain crosses the membrane as a helical span at residues 132–152; it reads TVTLVQFAVGSVLITFMWALN. At 153 to 209 the chain is on the chloroplast intermembrane side; the sequence is LYKRPKISAAQLAAILPLAVVHTLGNLFTNMSLGKVSVSFTHTIKAMEPFFSVVLSA. Residues 210-230 traverse the membrane as a helical segment; the sequence is MFLGEVPTPWVIGSIIPIVGG. Over 231-278 the chain is Lumenal; that stretch reads VALASVTEVSFNWAGFLSAMASNLTNQSRNVLSKKVMVKKDDSLDNIT. The helical transmembrane segment at 279-298 threads the bilayer; sequence LFSIITLMSLFLMAPVTFFS. Topologically, residues 299 to 374 are chloroplast intermembrane; the sequence is EGIKFTPSYI…IFFKTPVSPV (76 aa). The chain crosses the membrane as a helical span at residues 375–394; sequence NAFGTGIALAGVFLYSRVKR. Residues 395 to 402 lie on the Lumenal side of the membrane; the sequence is IKPKPKTA.

Belongs to the TPT transporter family. TPT (TC 2.A.7.9) subfamily. In terms of assembly, homodimer.

The protein localises to the plastid. It localises to the chloroplast membrane. In terms of biological role, mediates the export of fixed carbons from the chloroplasts into the cytosol in the form of triose phosphates. This is Triose phosphate/phosphate translocator, non-green plastid, chloroplastic (NGTPT) from Brassica oleracea var. botrytis (Cauliflower).